The chain runs to 684 residues: Glycine--tRNA ligase beta subunit (684 aa).

Belongs to the class-II aminoacyl-tRNA synthetase family. As to quaternary structure, tetramer of two alpha and two beta subunits.

It localises to the cytoplasm. It catalyses the reaction tRNA(Gly) + glycine + ATP = glycyl-tRNA(Gly) + AMP + diphosphate. The chain is Glycine--tRNA ligase beta subunit from Pseudomonas entomophila (strain L48).